Consider the following 165-residue polypeptide: GTP-dependent dephospho-CoA kinase (165 aa).

Residues aspartate 44, valine 45, aspartate 63, lysine 65, glutamate 115, and aspartate 138 each coordinate GTP.

Belongs to the GTP-dependent DPCK family.

It catalyses the reaction 3'-dephospho-CoA + GTP = GDP + CoA + H(+). Its pathway is cofactor biosynthesis; coenzyme A biosynthesis. Catalyzes the GTP-dependent phosphorylation of the 3'-hydroxyl group of dephosphocoenzyme A to form coenzyme A (CoA). The polypeptide is GTP-dependent dephospho-CoA kinase (Picrophilus torridus (strain ATCC 700027 / DSM 9790 / JCM 10055 / NBRC 100828 / KAW 2/3)).